The sequence spans 534 residues: Autophagy-related protein 20 (534 aa).

Residues 1-21 (MAQDDSYEEKPEVISSDSGGS) are disordered. The PX domain maps to 1–137 (MAQDDSYEEK…DKFIHSTVSW (137 aa)). Positions 55, 57, 81, and 104 each coordinate a 1,2-diacyl-sn-glycero-3-phospho-(1D-myo-inositol-3-phosphate). The interval 179-272 (ANSLSPPSSR…NGKDAPSPVL (94 aa)) is disordered. The span at 203 to 212 (SSLEPSSPLG) shows a compositional bias: low complexity. Polar residues predominate over residues 245-263 (YNSSPSELSPTQRRSSISN).

It belongs to the sorting nexin family.

The protein localises to the cytoplasm. It is found in the endosome membrane. The protein resides in the preautophagosomal structure membrane. In terms of biological role, required for cytoplasm to vacuole transport (Cvt), pexophagy and mitophagy. Also involved in endoplasmic reticulum-specific autophagic process and is essential for the survival of cells subjected to severe ER stress. Functions in protein retrieval from the endocytic pathway. The sequence is that of Autophagy-related protein 20 (atg20) from Schizosaccharomyces pombe (strain 972 / ATCC 24843) (Fission yeast).